The chain runs to 522 residues: Neuropeptide FF receptor 2 (522 aa).

Topologically, residues 1–147 (MNSFFGTPAA…NYYLHQPQVA (147 aa)) are extracellular. The tract at residues 25–49 (KEAGRERRALSVQQRGGPAWSGSLE) is disordered. N-linked (GlcNAc...) asparagine glycans are attached at residues Asn-110, Asn-122, and Asn-133. A helical membrane pass occupies residues 148–168 (AIFIISYFLIFFLCMMGNTVV). The Cytoplasmic portion of the chain corresponds to 169-184 (CFIVMRNKHMHTVTNL). Residues 185 to 205 (FILNLAISDLLVGIFCMPITL) traverse the membrane as a helical segment. The Extracellular portion of the chain corresponds to 206-221 (LDNIIAGWPFGNTMCK). Cys-220 and Cys-308 are oxidised to a cystine. A helical membrane pass occupies residues 222-242 (ISGLVQGISVAASVFTLVAIA). Topologically, residues 243-262 (VDRFQCVVYPFKPKLTIKTA) are cytoplasmic. The chain crosses the membrane as a helical span at residues 263–283 (FVIIMIIWVLAITIMSPSAVM). Residues 284–319 (LHVQEEKYYRVRLNSQNKTSPVYWCREDWPNQEMRK) are Extracellular-facing. Asn-300 is a glycosylation site (N-linked (GlcNAc...) asparagine). The helical transmembrane segment at 320–340 (IYTTVLFANIYLAPLSLIVIM) threads the bilayer. The Cytoplasmic segment spans residues 341 to 377 (YGRIGISLFRAAVPHTGRKNQEQWHVVSRKKQKIIKM). Residues 378–398 (LLIVALLFILSWLPLWTLMML) traverse the membrane as a helical segment. Residues 399-413 (SDYADLSPNELQIIN) are Extracellular-facing. A helical transmembrane segment spans residues 414–434 (IYIYPFAHWLAFGNSSVNPII). Over 435-522 (YGFFNENFRR…LKETTNSSEI (88 aa)) the chain is Cytoplasmic.

This sequence belongs to the G-protein coupled receptor 1 family. In terms of tissue distribution, isoform 1 is abundant in placenta. Relatively highly expressed in thymus, testis, and small intestine. Expressed at low levels in several tissues including spleen, prostate, brain, heart, ovary, colon, kidney, lung, liver and pancreas and not expressed in skeletal muscle and leukocytes. Isoform 2 expression is highest in placenta (but at relatively low level compared to isoform 1). Very low level of expression in numerous tissues including adipose tissue and many brain regions. Isoform 3 is expressed in brain and heart and, at lower levels, in kidney, liver, lung and pancreas.

It is found in the cell membrane. Its function is as follows. Receptor for NPAF (A-18-F-amide) and NPFF (F-8-F-amide) neuropeptides, also known as morphine-modulating peptides. Can also be activated by a variety of naturally occurring or synthetic FMRF-amide like ligands. This receptor mediates its action by association with G proteins that activate a phosphatidylinositol-calcium second messenger system. This chain is Neuropeptide FF receptor 2, found in Homo sapiens (Human).